Here is a 339-residue protein sequence, read N- to C-terminus: Dihydroorotate dehydrogenase (quinone) (339 aa).

FMN is bound by residues 62–66 (AGLDK) and Thr86. A substrate-binding site is contributed by Lys66. Residue 111–115 (NRMGF) participates in substrate binding. Residues Asn139 and Asn172 each contribute to the FMN site. Asn172 contacts substrate. Ser175 functions as the Nucleophile in the catalytic mechanism. Residue Asn177 coordinates substrate. FMN is bound by residues Lys217 and Thr245. 246–247 (NT) contributes to the substrate binding site. FMN contacts are provided by residues Gly268, Gly297, and 318–319 (YS).

The protein belongs to the dihydroorotate dehydrogenase family. Type 2 subfamily. In terms of assembly, monomer. FMN is required as a cofactor.

Its subcellular location is the cell membrane. The enzyme catalyses (S)-dihydroorotate + a quinone = orotate + a quinol. The protein operates within pyrimidine metabolism; UMP biosynthesis via de novo pathway; orotate from (S)-dihydroorotate (quinone route): step 1/1. Functionally, catalyzes the conversion of dihydroorotate to orotate with quinone as electron acceptor. The chain is Dihydroorotate dehydrogenase (quinone) from Shewanella denitrificans (strain OS217 / ATCC BAA-1090 / DSM 15013).